Reading from the N-terminus, the 466-residue chain is Asparagine--tRNA ligase (466 aa).

It belongs to the class-II aminoacyl-tRNA synthetase family. As to quaternary structure, homodimer.

It is found in the cytoplasm. It carries out the reaction tRNA(Asn) + L-asparagine + ATP = L-asparaginyl-tRNA(Asn) + AMP + diphosphate + H(+). This Syntrophobacter fumaroxidans (strain DSM 10017 / MPOB) protein is Asparagine--tRNA ligase.